The sequence spans 644 residues: Chaperone protein HtpG (644 aa).

The interval 1 to 352 is a; substrate-binding; it reads MNARVEQLEF…AQDMSLNVSR (352 aa). The tract at residues 353–566 is b; that stretch reads EILQQDRQIK…AFGITPALAR (214 aa). The interval 567 to 644 is c; sequence LYRASGQDIP…ILADRLARTL (78 aa).

It belongs to the heat shock protein 90 family. Homodimer.

It localises to the cytoplasm. Its function is as follows. Molecular chaperone. Has ATPase activity. This Mycobacterium avium (strain 104) protein is Chaperone protein HtpG.